A 160-amino-acid chain; its full sequence is Phosphopantetheine adenylyltransferase (160 aa).

Ser10 is a binding site for substrate. ATP-binding positions include 10–11 and His18; that span reads SF. Positions 42, 74, and 88 each coordinate substrate. ATP-binding positions include 89–91, Glu99, and 124–130; these read GLR and YSFISST.

The protein belongs to the bacterial CoaD family. Homohexamer. Requires Mg(2+) as cofactor.

It localises to the cytoplasm. It catalyses the reaction (R)-4'-phosphopantetheine + ATP + H(+) = 3'-dephospho-CoA + diphosphate. It functions in the pathway cofactor biosynthesis; coenzyme A biosynthesis; CoA from (R)-pantothenate: step 4/5. Functionally, reversibly transfers an adenylyl group from ATP to 4'-phosphopantetheine, yielding dephospho-CoA (dPCoA) and pyrophosphate. The chain is Phosphopantetheine adenylyltransferase from Leptospira borgpetersenii serovar Hardjo-bovis (strain L550).